A 115-amino-acid polypeptide reads, in one-letter code: Large ribosomal subunit protein P2x (115 aa).

The disordered stretch occupies residues 78-115 (GGGGGAASAAEPVAESKKKVEEVKDESSDDAGMMGLFD). Basic and acidic residues predominate over residues 91-103 (AESKKKVEEVKDE). Residues serine 104 and serine 105 each carry the phosphoserine modification.

It belongs to the eukaryotic ribosomal protein P1/P2 family. In terms of assembly, P1 and P2 exist as dimers at the large ribosomal subunit.

Plays an important role in the elongation step of protein synthesis. This chain is Large ribosomal subunit protein P2x (RPP2C), found in Arabidopsis thaliana (Mouse-ear cress).